A 544-amino-acid chain; its full sequence is Probable acyl-activating enzyme 8 (544 aa).

It belongs to the ATP-dependent AMP-binding enzyme family. As to expression, expressed at low levels in roots, leaves, stems, flowers and developing seeds.

May act as an acid--thiol ligase that activates carboxylic acids by forming acyl-CoAs. The chain is Probable acyl-activating enzyme 8 (AAE8) from Arabidopsis thaliana (Mouse-ear cress).